Here is a 301-residue protein sequence, read N- to C-terminus: Peptidyl-prolyl isomerase CWC27 (301 aa).

The 151-residue stretch at Thr9 to Ile159 folds into the PPIase cyclophilin-type domain. Positions Thr251–Glu280 are disordered.

The protein belongs to the cyclophilin-type PPIase family. CWC27 subfamily. Belongs to the CWC complex (or CEF1-associated complex), a spliceosome subcomplex composed of the U2, U5 and U6 snRNAs and at least BUD13, BUD31, BRR2, CDC40, CEF1, CLF1, CUS1, CWC2, CWC15, CWC21, CWC22, CWC23, CWC24, CWC25, CWC27, ECM2, HSH155, IST3, ISY1, LEA1, MSL1, NTC20, PRP8, PRP9, PRP11, PRP19, PRP21, PRP22, PRP45, PRP46, SLU7, SMB1, SMD1, SMD2, SMD3, SMX2, SMX3, SNT309, SNU114, SPP2, SYF1, SYF2, RSE1 and YJU2.

It is found in the cytoplasm. It localises to the nucleus. The catalysed reaction is [protein]-peptidylproline (omega=180) = [protein]-peptidylproline (omega=0). Functionally, PPIases accelerate the folding of proteins. Catalyzes the cis-trans isomerization of proline imidic peptide bonds in oligopeptides. Involved in pre-mRNA splicing. The chain is Peptidyl-prolyl isomerase CWC27 (CWC27) from Saccharomyces cerevisiae (strain ATCC 204508 / S288c) (Baker's yeast).